A 338-amino-acid chain; its full sequence is Glyceraldehyde-3-phosphate dehydrogenase (338 aa).

NAD(+) is bound by residues 11 to 12 (TI) and Gly111. 140–142 (SCN) contacts D-glyceraldehyde 3-phosphate. The Nucleophile role is filled by Cys141. Arg169 serves as a coordination point for NAD(+). 195-196 (HG) is a binding site for D-glyceraldehyde 3-phosphate. Gln302 is an NAD(+) binding site.

This sequence belongs to the glyceraldehyde-3-phosphate dehydrogenase family. In terms of assembly, homotetramer.

It is found in the cytoplasm. It catalyses the reaction D-glyceraldehyde 3-phosphate + phosphate + NADP(+) = (2R)-3-phospho-glyceroyl phosphate + NADPH + H(+). It carries out the reaction D-glyceraldehyde 3-phosphate + phosphate + NAD(+) = (2R)-3-phospho-glyceroyl phosphate + NADH + H(+). It functions in the pathway carbohydrate degradation; glycolysis; pyruvate from D-glyceraldehyde 3-phosphate: step 1/5. The protein is Glyceraldehyde-3-phosphate dehydrogenase (gap) of Methanobacterium bryantii.